The primary structure comprises 175 residues: MSSANQDATRGQIEAELDDPLRALGLDIEAVEITPAGKRRILRVAVDKDGGVTLDEVAEATREVNRVLDGSEVMGEQPYTLEVTSRGVDRPLTLPRHWRRNAGRLVKVAFADGRAATGRILDSNEEQVTLDVGGTRQQVAYAEVKKALVQVEFNRPTDGPGDDGDDGGDDEAGEA.

The tract at residues Glu152–Ala175 is disordered. Positions Pro160–Ala175 are enriched in acidic residues.

Belongs to the RimP family.

It is found in the cytoplasm. Its function is as follows. Required for maturation of 30S ribosomal subunits. In Nocardioides sp. (strain ATCC BAA-499 / JS614), this protein is Ribosome maturation factor RimP.